We begin with the raw amino-acid sequence, 393 residues long: Putative F-box protein At1g55070 (393 aa).

In terms of domain architecture, F-box spans 29 to 74 (GEYFDRIPADLVIKILSKLSAKSMAKCRCVCKLLSSIIRQPNYNQL).

The chain is Putative F-box protein At1g55070 from Arabidopsis thaliana (Mouse-ear cress).